The primary structure comprises 93 residues: YcgL domain-containing protein KPN78578_22820 (93 aa).

Positions 1–85 (MFCVIYRSTK…PSENLLKKHL (85 aa)) constitute a YcgL domain.

This Klebsiella pneumoniae subsp. pneumoniae (strain ATCC 700721 / MGH 78578) protein is YcgL domain-containing protein KPN78578_22820.